The primary structure comprises 336 residues: Phospholipase A1 (336 aa).

Positions 1-27 are cleaved as a signal peptide; it reads MEENMNLKYLLLFVYFVQVLNCCYGHG. Positions 28-36 are excised as a propeptide; the sequence is DPLSYELDR. Cys40 and Cys123 form a disulfide bridge. Catalysis depends on Ser173, which acts as the Nucleophile. Asp201 (charge relay system) is an active-site residue. 2 disulfides stabilise this stretch: Cys212–Cys217 and Cys255–Cys263. His265 (charge relay system) is an active-site residue. 3 cysteine pairs are disulfide-bonded: Cys280–Cys304, Cys281–Cys329, and Cys297–Cys302.

The protein belongs to the AB hydrolase superfamily. Lipase family. In terms of tissue distribution, expressed by the venom gland.

It localises to the secreted. It carries out the reaction a 1,2-diacyl-sn-glycero-3-phosphocholine + H2O = a 2-acyl-sn-glycero-3-phosphocholine + a fatty acid + H(+). Catalyzes the hydrolysis of phosphatidylcholine with phospholipase A1 activity. Induces hemolytic activity. Acts as an allergen. This is Phospholipase A1 from Vespula vulgaris (Yellow jacket).